We begin with the raw amino-acid sequence, 222 residues long: Cytidylate kinase (222 aa).

10 to 18 (GPAGSGKSS) contributes to the ATP binding site.

Belongs to the cytidylate kinase family. Type 1 subfamily.

Its subcellular location is the cytoplasm. It catalyses the reaction CMP + ATP = CDP + ADP. The catalysed reaction is dCMP + ATP = dCDP + ADP. This is Cytidylate kinase from Acholeplasma laidlawii (strain PG-8A).